We begin with the raw amino-acid sequence, 538 residues long: Chaperonin GroEL (538 aa).

ATP contacts are provided by residues 29–32 (TLGP), 86–90 (DGTTT), Gly-413, 479–481 (DAL), and Asp-495.

Belongs to the chaperonin (HSP60) family. Forms a cylinder of 14 subunits composed of two heptameric rings stacked back-to-back. Interacts with the co-chaperonin GroES.

The protein resides in the cytoplasm. It catalyses the reaction ATP + H2O + a folded polypeptide = ADP + phosphate + an unfolded polypeptide.. Its function is as follows. Together with its co-chaperonin GroES, plays an essential role in assisting protein folding. The GroEL-GroES system forms a nano-cage that allows encapsulation of the non-native substrate proteins and provides a physical environment optimized to promote and accelerate protein folding. The sequence is that of Chaperonin GroEL from Thermotoga maritima (strain ATCC 43589 / DSM 3109 / JCM 10099 / NBRC 100826 / MSB8).